The primary structure comprises 576 residues: Carboxypeptidase S (576 aa).

Topologically, residues 1–19 (MIALPVEKAPRKSLWQRHR) are cytoplasmic. A Glycyl lysine isopeptide (Lys-Gly) (interchain with G-Cter in ubiquitin) cross-link involves residue K8. A helical transmembrane segment spans residues 20 to 40 (AFISGIVALIIIGTFFLTSGL). At 41-576 (HPAPPHEAKR…EYIVNVNEYA (536 aa)) the chain is on the lumenal side. The disordered stretch occupies residues 44–65 (PPHEAKRPHHGKGPMHSPKCEK). N88 carries an N-linked (GlcNAc...) asparagine glycan. H168 is a binding site for Zn(2+). Residue D170 is part of the active site. An N-linked (GlcNAc...) asparagine glycan is attached at N176. D205 contributes to the Zn(2+) binding site. N228 carries an N-linked (GlcNAc...) asparagine glycan. The active-site Proton acceptor is the E239. Residues E240 and D268 each contribute to the Zn(2+) site. N-linked (GlcNAc...) asparagine glycans are attached at residues N381 and N525. Residue H547 coordinates Zn(2+).

Belongs to the peptidase M20A family. In terms of assembly, yscS is synthesized as one polypeptide chain precursor which after carbohydrate modification in the secretory pathway yields two active precursor molecules. The proteolytically unprocessed forms are associated with the membrane, whereas the mature forms of the enzyme are soluble. Zn(2+) serves as cofactor. Glycosylated. Post-translationally, ubiquitinated. Ubiquitination mediates sorting into internal vesicles in late endosomes. TUL1 is required for ubiquitination.

It is found in the vacuole membrane. The enzyme catalyses Release of a C-terminal amino acid from a peptide in which glycine is the penultimate amino acid, e.g. Z-Gly-|-Leu.. Its function is as follows. Necessary for use of certain peptides as sole nitrogen source. May also cleave intracellularly generated peptides to recycle amino acids for protein synthesis. This chain is Carboxypeptidase S (CPS1), found in Saccharomyces cerevisiae (strain ATCC 204508 / S288c) (Baker's yeast).